A 735-amino-acid polypeptide reads, in one-letter code: Protostadienol synthase helA (735 aa).

One copy of the PFTB 1 repeat lies at 132-173 (KQEMCRYLLNVVNEDGGWGLFIQSPSTVFGTVMNYCMLRILG). Residue aspartate 463 is the Proton donor of the active site. PFTB repeat units follow at residues 490–531 (LQQA…YENV), 567–607 (LSRS…ACMG), and 616–663 (CQRA…AVIG).

This sequence belongs to the terpene cyclase/mutase family.

It catalyses the reaction (S)-2,3-epoxysqualene = (17Z)-protosta-17(20),24-dien-3beta-ol. Its pathway is mycotoxin biosynthesis. Functionally, protostadienol synthase; part of the gene cluster that mediates the biosynthesis of helvolic acid, an antibacterial nortriterpenoid. Protostadienol synthase helA cyclizes (3S)-oxidosqualene to (17Z)-protosta-17(20),24-dien-3-beta-ol (protostadienol). The synthesis of protostadienol is followed by several steps of monooxygenation, dehydrogenation, and acyl transfer to yield the final helvolic acid. Following the cyclization to the tetracyclic protostadienol by helA, cytochrome P450 monooxygenases helB1-mediated and helB2-mediated oxidation at C-4 and C-16, acyltransferase helD2-dependent acetylation of 16-OH, oxidation of C-21 by cytochrome P450 monooxygenase helB4, and short chain dehydrogenase helC-dependent oxidative decarboxylation yield the fusidane skeleton. This intermediate is further modified in three additional steps mediated by the cytochrome P450 monooxygenase helB3, the acyltransferase helD1, and the 3-ketosteroid 1-dehydrogenase helE to give helvolic acid. Compared with the late stages in the biosynthesis of helvolic acid, enzymes involved in the early stage modifications act in a relatively strict order. The hydroxylation of C-16 by helB1 and subsequent acetylation by helD2 should occur before the helB3-mediated oxidation of C-21. C-4 demethylation in fusidane-type antibiotics proceeds in an unusual manner though it is also achieved by oxidative decarboxylation. The methyl group at C-4 beta position is oxidized by helB1 and subsequently removed by the short chain dehydrogenase helC. The chain is Protostadienol synthase helA from Aspergillus fumigatus (strain ATCC MYA-4609 / CBS 101355 / FGSC A1100 / Af293) (Neosartorya fumigata).